We begin with the raw amino-acid sequence, 166 residues long: Interferon gamma (166 aa).

The signal sequence occupies residues 1-23 (MKYTSSFLALLLCVLLGFSGSYG). Pyrrolidone carboxylic acid is present on Q24. N-linked (GlcNAc...) asparagine glycans are attached at residues N39 and N106.

The protein belongs to the type II (or gamma) interferon family. In terms of assembly, homodimer. Interacts with IFNGR1 (via extracellular domain); this interaction promotes IFNGR1 dimerization. In terms of tissue distribution, released primarily from activated T lymphocytes.

The protein localises to the secreted. In terms of biological role, type II interferon produced by immune cells such as T-cells and NK cells that plays crucial roles in antimicrobial, antiviral, and antitumor responses by activating effector immune cells and enhancing antigen presentation. Primarily signals through the JAK-STAT pathway after interaction with its receptor IFNGR1 to affect gene regulation. Upon IFNG binding, IFNGR1 intracellular domain opens out to allow association of downstream signaling components JAK2, JAK1 and STAT1, leading to STAT1 activation, nuclear translocation and transcription of IFNG-regulated genes. Many of the induced genes are transcription factors such as IRF1 that are able to further drive regulation of a next wave of transcription. Plays a role in class I antigen presentation pathway by inducing a replacement of catalytic proteasome subunits with immunoproteasome subunits. In turn, increases the quantity, quality, and repertoire of peptides for class I MHC loading. Increases the efficiency of peptide generation also by inducing the expression of activator PA28 that associates with the proteasome and alters its proteolytic cleavage preference. Up-regulates as well MHC II complexes on the cell surface by promoting expression of several key molecules such as cathepsins B/CTSB, H/CTSH, and L/CTSL. Participates in the regulation of hematopoietic stem cells during development and under homeostatic conditions by affecting their development, quiescence, and differentiation. The sequence is that of Interferon gamma (IFNG) from Ovis aries (Sheep).